The following is a 600-amino-acid chain: DNA mismatch repair protein MutL (600 aa).

The segment at 348–375 (QPQAQRPQTAWSAETSPFRPYQPTTGFS) is disordered. The segment covering 349 to 362 (PQAQRPQTAWSAET) has biased composition (polar residues).

It belongs to the DNA mismatch repair MutL/HexB family.

Its function is as follows. This protein is involved in the repair of mismatches in DNA. It is required for dam-dependent methyl-directed DNA mismatch repair. May act as a 'molecular matchmaker', a protein that promotes the formation of a stable complex between two or more DNA-binding proteins in an ATP-dependent manner without itself being part of a final effector complex. This chain is DNA mismatch repair protein MutL, found in Rhizobium leguminosarum bv. trifolii (strain WSM2304).